The primary structure comprises 247 residues: MLKATIEADIFRETIDAVSALVNECRLHVDEKGIRTITVDTSNVAMVSLELSASAFLTFAAEPCEIGLDIEKIRSMMSMIGKTDIVSLELDESGKKLKISFGGYEYSITLLDTKTIRKDPNAPNLNLPATFEVPGVMFNDAIKASSMVSDKISLAVSAETCVFTMNADGDSDRIKRELTGDDVHYLTCADARSLFSLDYLKDMGKSIGRAEKVQIRLGTDHPVQFSFVYAGGKGSVGYLLAPRIEAD.

The protein belongs to the PCNA family. Homotrimer. The subunits circularize to form a toroid; DNA passes through its center. Replication factor C (RFC) is required to load the toroid on the DNA.

Sliding clamp subunit that acts as a moving platform for DNA processing. Responsible for tethering the catalytic subunit of DNA polymerase and other proteins to DNA during high-speed replication. The chain is DNA polymerase sliding clamp from Methanocorpusculum labreanum (strain ATCC 43576 / DSM 4855 / Z).